A 750-amino-acid chain; its full sequence is GTP pyrophosphokinase rsh (750 aa).

The HD domain occupies 45–144 (YFSHPLEVAA…VKLADRLHNM (100 aa)). A TGS domain is found at 390–451 (DQVFCFTPKG…KNGDEVDIIR (62 aa)). The tract at residues 587-613 (AAKVDPAATTPKPGKRALPIRGTNPDL) is disordered. The ACT domain occupies 676 to 750 (RISVSAINSP…SVSSAKRVNG (75 aa)).

This sequence belongs to the RelA/SpoT family.

It catalyses the reaction GTP + ATP = guanosine 3'-diphosphate 5'-triphosphate + AMP. Functionally, functions as a (p)ppGpp synthase. In eubacteria ppGpp (guanosine 3'-diphosphate 5'-diphosphate) is a mediator of the stringent response that coordinates a variety of cellular activities in response to changes in nutritional abundance. Plays a role in adaptation of Brucella to its intracellular host environment. This is GTP pyrophosphokinase rsh (rsh) from Brucella ovis (strain ATCC 25840 / 63/290 / NCTC 10512).